Consider the following 177-residue polypeptide: Translation initiation factor IF-3 (177 aa).

The protein belongs to the IF-3 family. Monomer.

It localises to the cytoplasm. IF-3 binds to the 30S ribosomal subunit and shifts the equilibrium between 70S ribosomes and their 50S and 30S subunits in favor of the free subunits, thus enhancing the availability of 30S subunits on which protein synthesis initiation begins. The chain is Translation initiation factor IF-3 from Nostoc punctiforme (strain ATCC 29133 / PCC 73102).